The chain runs to 198 residues: Molybdenum cofactor guanylyltransferase (198 aa).

GTP is bound by residues Leu-14–Gly-16, Lys-27, Asp-73, and Asp-103. Mg(2+) is bound at residue Asp-103.

The protein belongs to the MobA family. In terms of assembly, monomer. It depends on Mg(2+) as a cofactor.

It is found in the cytoplasm. The catalysed reaction is Mo-molybdopterin + GTP + H(+) = Mo-molybdopterin guanine dinucleotide + diphosphate. In terms of biological role, transfers a GMP moiety from GTP to Mo-molybdopterin (Mo-MPT) cofactor (Moco or molybdenum cofactor) to form Mo-molybdopterin guanine dinucleotide (Mo-MGD) cofactor. The protein is Molybdenum cofactor guanylyltransferase of Pseudomonas aeruginosa (strain LESB58).